Consider the following 197-residue polypeptide: MFGCLVAGRLVQTAAQQVAEDKFVFDLPDYESINHVVVFMLGTIPFPEGMGGSVYFSYPDSNGMPVWQLLGFVTNGKPSAIFKISGLKSGEGSQHPFGAMNIVRTPSVAQIGISVELLDSMAQQTPVGNAAVSSVDSFTQFTQKMLDNFYNFASSFAVSQAQMTPSPSEMFIPANVVLKWYENFQRRLAQNPLFWKT.

The tract at residues 18 to 55 is required for F-X-F-G repeats-nucleoporins recognition and nuclear import; sequence VAEDKFVFDLPDYESINHVVVFMLGTIPFPEGMGGSVY. Residues 124 to 134 are flexible linker region involved in nuclear import of HSP70 proteins; it reads QTPVGNAAVSS.

It belongs to the OPI10 family. Forms an asymmetric homodimer; required for binding and nuclear import of HSP70 proteins. Interacts with ATP-bound HSP70 proteins. Interacts with NUP62 and NUP153 (via F-X-F-G repeats). Interacts with HSPA8.

The protein resides in the cytoplasm. The protein localises to the cytosol. It is found in the nucleus. Functionally, acts as a specific nuclear import carrier for HSP70 proteins following heat-shock stress: acts by mediating the nucleoporin-dependent translocation of ATP-bound HSP70 proteins into the nucleus. HSP70 proteins import is required to protect cells from heat shock damages. Does not translocate ADP-bound HSP70 proteins into the nucleus. The chain is Protein Hikeshi from Homo sapiens (Human).